The following is a 400-amino-acid chain: Elongation factor Tu (400 aa).

In terms of domain architecture, tr-type G spans 10–208 (KPHVNVGTIG…AMDNYIPDPQ (199 aa)). A G1 region spans residues 19 to 26 (GHIDHGKS). GTP is bound at residue 19–26 (GHIDHGKS). Serine 26 contributes to the Mg(2+) binding site. A G2 region spans residues 60-64 (GITIN). A G3 region spans residues 81-84 (DCPG). Residues 81-85 (DCPGH) and 136-139 (NKTD) contribute to the GTP site. A G4 region spans residues 136–139 (NKTD). Residues 174–176 (SAL) form a G5 region.

This sequence belongs to the TRAFAC class translation factor GTPase superfamily. Classic translation factor GTPase family. EF-Tu/EF-1A subfamily. As to quaternary structure, monomer.

Its subcellular location is the cytoplasm. It catalyses the reaction GTP + H2O = GDP + phosphate + H(+). In terms of biological role, GTP hydrolase that promotes the GTP-dependent binding of aminoacyl-tRNA to the A-site of ribosomes during protein biosynthesis. This Thermotoga maritima (strain ATCC 43589 / DSM 3109 / JCM 10099 / NBRC 100826 / MSB8) protein is Elongation factor Tu.